The primary structure comprises 521 residues: Glucosidase 2 subunit beta (521 aa).

Residues 1 to 14 (MLLLLLLLLPLCWA) form the signal peptide. A Phosphoserine modification is found at Ser24. LDL-receptor class A domains are found at residues 37-71 (FTCLDGTATIPFDQVNDDYCDCKDGSDEPGTAACP) and 69-113 (ACPN…TVCE). Intrachain disulfides connect Cys39-Cys58 and Cys56-Cys70. Asp49 serves as a coordination point for substrate. 6 residues coordinate Ca(2+): Gln50, Asp53, Tyr55, Asp57, Asp63, and Glu64. Asp53 contributes to the substrate binding site. Asn72 carries an N-linked (GlcNAc...) asparagine glycan. Intrachain disulfides connect Cys77/Cys99, Cys97/Cys112, and Cys100/Cys116. Ser89 bears the Phosphoserine; by PKC mark. Ca(2+) is bound by residues Arg91, Asp94, Val96, Asp98, Asp104, and Glu105. At Lys166 the chain carries N6-succinyllysine. Ser168 bears the Phosphoserine mark. EF-hand domains lie at 209–244 (REQERAASAFQELDDNMDGMVSLAELQTHPELDTDG) and 245–290 (DGAL…TDIP). Positions 222, 224, 226, 228, and 233 each coordinate Ca(2+). Disordered regions lie at residues 226–267 (DGMV…DTTS) and 280–350 (YRSE…EKMP). 2 stretches are compositionally biased toward acidic residues: residues 241 to 253 (DTDGDGALSEEEA) and 308 to 331 (TEEEEEEEEEPEEEEEEEEEEEEA). Over residues 332 to 343 (PPPLQPPQPPSP) the composition is skewed to pro residues. Ser376 and Ser383 each carry phosphoserine; by PKC. Residues 406 to 507 (SQCYELTTNE…ELMTPAACPE (102 aa)) enclose the MRH domain. Residues Cys408 and Cys421 are joined by a disulfide bond. Phosphoserine; by PKC is present on Ser427. 2 cysteine pairs are disulfide-bonded: Cys464–Cys493 and Cys478–Cys505. N-linked (GlcNAc...) asparagine glycosylation occurs at Asn469. The short motif at 518-521 (HDEL) is the Prevents secretion from ER element.

As to quaternary structure, heterodimer of a catalytic alpha subunit (GANAB) and a beta subunit (PRKCSH). Binds glycosylated PTPRC. As to expression, expressed in kidney (at protein level).

The protein resides in the endoplasmic reticulum. It participates in glycan metabolism; N-glycan metabolism. Regulatory subunit of glucosidase II that cleaves sequentially the 2 innermost alpha-1,3-linked glucose residues from the Glc(2)Man(9)GlcNAc(2) oligosaccharide precursor of immature glycoproteins. Required for efficient PKD1/Polycystin-1 biogenesis and trafficking to the plasma membrane of the primary cilia. The sequence is that of Glucosidase 2 subunit beta from Mus musculus (Mouse).